The primary structure comprises 282 residues: 2-dehydro-3-deoxyphosphooctonate aldolase (282 aa).

It belongs to the KdsA family.

It is found in the cytoplasm. It catalyses the reaction D-arabinose 5-phosphate + phosphoenolpyruvate + H2O = 3-deoxy-alpha-D-manno-2-octulosonate-8-phosphate + phosphate. It functions in the pathway carbohydrate biosynthesis; 3-deoxy-D-manno-octulosonate biosynthesis; 3-deoxy-D-manno-octulosonate from D-ribulose 5-phosphate: step 2/3. It participates in bacterial outer membrane biogenesis; lipopolysaccharide biosynthesis. This chain is 2-dehydro-3-deoxyphosphooctonate aldolase, found in Shewanella sp. (strain W3-18-1).